A 1913-amino-acid polypeptide reads, in one-letter code: Protein TIC 214 (1913 aa).

The next 5 helical transmembrane spans lie at 18 to 38 (IINSVVVVGLYYGFLTTFSIG), 64 to 84 (FITGQLMMFISIYYAPLHLAL), 124 to 144 (LSIQCVFLTNLIFQLFNHLML), 172 to 192 (VGWLIGHILFMKWVGLVVSWI), and 214 to 234 (LKSAIAQILSIIFFIACVNYL). 3 disordered regions span residues 245–330 (KLNE…ETEE), 707–734 (YTDKNQNRDQDPNPNTDNTTTENDNSDT), and 1605–1652 (EKED…RKKK). A compositionally biased stretch (basic and acidic residues) spans 260-289 (KESQKSKESEEERDVEKETTSETKETKQEQ). Residues 303 to 314 (EKEDPDKIDETE) show a composition bias toward acidic residues. Basic and acidic residues predominate over residues 315–330 (EIRVNGKEKKKDETEE). A compositionally biased stretch (low complexity) spans 718–729 (PNPNTDNTTTEN).

This sequence belongs to the TIC214 family. As to quaternary structure, part of the Tic complex.

Its subcellular location is the plastid. The protein resides in the chloroplast inner membrane. Involved in protein precursor import into chloroplasts. May be part of an intermediate translocation complex acting as a protein-conducting channel at the inner envelope. This Acorus calamus var. americanus (American sweet flag) protein is Protein TIC 214.